Consider the following 277-residue polypeptide: 5'-nucleotidase SurE (277 aa).

4 residues coordinate a divalent metal cation: aspartate 14, aspartate 15, serine 46, and asparagine 104.

It belongs to the SurE nucleotidase family. A divalent metal cation is required as a cofactor.

It localises to the cytoplasm. It carries out the reaction a ribonucleoside 5'-phosphate + H2O = a ribonucleoside + phosphate. In terms of biological role, nucleotidase that shows phosphatase activity on nucleoside 5'-monophosphates. In Picosynechococcus sp. (strain ATCC 27264 / PCC 7002 / PR-6) (Agmenellum quadruplicatum), this protein is 5'-nucleotidase SurE.